Consider the following 375-residue polypeptide: Lipid-A-disaccharide synthase (375 aa).

Belongs to the LpxB family.

It catalyses the reaction a lipid X + a UDP-2-N,3-O-bis[(3R)-3-hydroxyacyl]-alpha-D-glucosamine = a lipid A disaccharide + UDP + H(+). The protein operates within bacterial outer membrane biogenesis; LPS lipid A biosynthesis. Functionally, condensation of UDP-2,3-diacylglucosamine and 2,3-diacylglucosamine-1-phosphate to form lipid A disaccharide, a precursor of lipid A, a phosphorylated glycolipid that anchors the lipopolysaccharide to the outer membrane of the cell. In Pseudomonas putida (strain ATCC 47054 / DSM 6125 / CFBP 8728 / NCIMB 11950 / KT2440), this protein is Lipid-A-disaccharide synthase.